Here is a 636-residue protein sequence, read N- to C-terminus: Sodium-dependent multivitamin transporter (636 aa).

Transmembrane regions (helical) follow at residues 24–44 (FSLVDYVVFSLLLVFSLAIGL), 68–88 (CLPVALSLLATFQSAVAILGV), 101–121 (FLGCCYFLGLLIPAHVFIPVF), 143–163 (ICGTVTFIFQMVIYMGVVLYA), 176–196 (LWLSVLTLGIVCTIYTALGGL), 199–219 (VIWTDVFQTLVMFLGQLAVII), 256–276 (FWTLAFGGVFMMLSLYGVNQA), 297–317 (VFPCQQVALSMGCLIGLVMFA), 336–356 (FVLYFVMDLLKGLPGLPGLFV), 404–424 (FGYGLLCLGMAYISSQMGPVL), 428–448 (ISIFGMVGGPLLGLFCLGMFF), and 456–476 (AIVGLLAGLIMAFWIGIGSIV). 2 N-linked (GlcNAc...) asparagine glycosylation sites follow: Asn-489 and Asn-498. Residues 528–548 (LWYSAHNSTTVIVVGLIVSLL) traverse the membrane as a helical segment. The disordered stretch occupies residues 606–627 (LRASGDKEPMTEASPVHQGTSP).

It belongs to the sodium:solute symporter (SSF) (TC 2.A.21) family. As to quaternary structure, interacts with PDZD11.

The protein localises to the cell membrane. It localises to the apical cell membrane. The catalysed reaction is biotin(out) + 2 Na(+)(out) = biotin(in) + 2 Na(+)(in). The enzyme catalyses (R)-pantothenate(out) + 2 Na(+)(out) = (R)-pantothenate(in) + 2 Na(+)(in). It carries out the reaction (R)-lipoate(out) + 2 Na(+)(out) = (R)-lipoate(in) + 2 Na(+)(in). It catalyses the reaction iodide(out) + 2 Na(+)(out) = iodide(in) + 2 Na(+)(in). Sodium-dependent multivitamin transporter that mediates the electrogenic transport of pantothenate, biotin, lipoate and iodide. Functions as a Na(+)-coupled substrate symporter where the stoichiometry of Na(+):substrate is 2:1, creating an electrochemical Na(+) gradient used as driving force for substrate uptake. Required for biotin and pantothenate uptake in the intestine across the brush border membrane. Plays a role in the maintenance of intestinal mucosa integrity, by providing the gut mucosa with biotin. Contributes to the luminal uptake of biotin and pantothenate into the brain across the blood-brain barrier. The protein is Sodium-dependent multivitamin transporter (SLC5A6) of Oryctolagus cuniculus (Rabbit).